A 915-amino-acid polypeptide reads, in one-letter code: Protein translocase subunit SecA (915 aa).

ATP contacts are provided by residues glutamine 87, 105 to 109 (GEGKT), and aspartate 512. The segment covering 849 to 864 (AAQQQARQAPLPNAPA) has biased composition (low complexity). The segment at 849-915 (AAQQQARQAP…CHGSRAKDHA (67 aa)) is disordered. Over residues 876–891 (PEEKVARVAAERHIGR) the composition is skewed to basic and acidic residues. Residues cysteine 895, cysteine 897, cysteine 906, and histidine 907 each coordinate Zn(2+).

Belongs to the SecA family. Monomer and homodimer. Part of the essential Sec protein translocation apparatus which comprises SecA, SecYEG and auxiliary proteins SecDF-YajC and YidC. Requires Zn(2+) as cofactor.

Its subcellular location is the cell inner membrane. The protein localises to the cytoplasm. It carries out the reaction ATP + H2O + cellular proteinSide 1 = ADP + phosphate + cellular proteinSide 2.. Part of the Sec protein translocase complex. Interacts with the SecYEG preprotein conducting channel. Has a central role in coupling the hydrolysis of ATP to the transfer of proteins into and across the cell membrane, serving both as a receptor for the preprotein-SecB complex and as an ATP-driven molecular motor driving the stepwise translocation of polypeptide chains across the membrane. In Actinobacillus succinogenes (strain ATCC 55618 / DSM 22257 / CCUG 43843 / 130Z), this protein is Protein translocase subunit SecA.